The primary structure comprises 822 residues: LPS-assembly protein LptD (822 aa).

The signal sequence occupies residues 1–37; sequence MRRASRSPFILSPVAHAVSRLVLCATLGWTYAGSGHA. The disordered stretch occupies residues 38-97; that stretch reads QVPAPAGGSEVPLGARPPASAPVAAQQETPLKLKSSPALAEEVPNGPGDEGPTFVFGDSV.

This sequence belongs to the LptD family. Component of the lipopolysaccharide transport and assembly complex. Interacts with LptE and LptA.

It is found in the cell outer membrane. Functionally, together with LptE, is involved in the assembly of lipopolysaccharide (LPS) at the surface of the outer membrane. This chain is LPS-assembly protein LptD, found in Polaromonas sp. (strain JS666 / ATCC BAA-500).